A 435-amino-acid polypeptide reads, in one-letter code: Enolase (435 aa).

Residue Gln163 participates in (2R)-2-phosphoglycerate binding. Catalysis depends on Glu205, which acts as the Proton donor. Residues Asp243, Glu292, and Asp319 each contribute to the Mg(2+) site. Residues Lys344, Arg373, Ser374, and Lys395 each contribute to the (2R)-2-phosphoglycerate site. Lys344 functions as the Proton acceptor in the catalytic mechanism.

It belongs to the enolase family. Mg(2+) serves as cofactor.

The protein resides in the cytoplasm. It localises to the secreted. It is found in the cell surface. The enzyme catalyses (2R)-2-phosphoglycerate = phosphoenolpyruvate + H2O. The protein operates within carbohydrate degradation; glycolysis; pyruvate from D-glyceraldehyde 3-phosphate: step 4/5. Its function is as follows. Catalyzes the reversible conversion of 2-phosphoglycerate (2-PG) into phosphoenolpyruvate (PEP). It is essential for the degradation of carbohydrates via glycolysis. The polypeptide is Enolase (Streptococcus uberis (strain ATCC BAA-854 / 0140J)).